Reading from the N-terminus, the 61-residue chain is Temporin-CG3 (61 aa).

An N-terminal signal peptide occupies residues 1 to 22 (MFTMKKPLLLLFFLATINLSLC). The propeptide at 23–44 (EQERNAEEERRDEPDERNAEVE) is removed in mature form.

This sequence belongs to the frog skin active peptide (FSAP) family. Temporin subfamily. Expressed by the skin glands.

It localises to the secreted. Antimicrobial peptide active against a variety of Gram-positive bacterial strains but not against Gram-negative bacteria. Has weak antifungal activity against a slime mold isolate. Has weak hemolytic activity against human erythrocytes. This chain is Temporin-CG3, found in Amolops chunganensis (Chungan torrent frog).